A 601-amino-acid chain; its full sequence is MKLTRDFPSNYTMAQWQPSDHQDAQVVGELFSHFGAERFTVQSTRTGVPVIWLARELLLDVVGFLRKLPSPFVMLYDLSATDERLRSHRDGLPQSDFTVFYHFISIDRNADVMLKVPLAESDLHLPTLTGHFPNANWYEREVWDLLGITFDGHPHLTRIMMPKSWQGHPLRKDYPARATEFDPFMLDAAKQDMEQENLLFKPEEWGMARGNENEDYMFLNLGPNHPSAHGAFRLVLQLDGEEIRNCVPDIGYHHRGAEKMGERQSWHSYIPYTDRVEYLGGVMNNLPYVLAVEKLAGIKVPNRVDVIRVMMAELFRIQSHLLFLGTYIQDVGAMTPVFFTFTDRQKIYTIIEAITGARMHPAWFRIGGVAHDLPKGWQRLVQDNLLSWLPKRLMDYEKAAMRNSILRGRTIGVSAYTTEQALAWGTTGAGLRATGLNFDVRKWRPYSGYDQFDFEVPVGSNGDAYDRATVRIEEIRQSLSIIEQCMKNMPEGPFKADHPLTTPPPKDRTLQDIETLITHFLQVSWGPVMPAAESFQMIEATKGINSYYLTSDGSTMSYRTRIRTPSFAHLQQIPSVIKGSMVSDLIVYLGSIDFVMSDVDR.

The segment at 1 to 191 (MKLTRDFPSN…DPFMLDAAKQ (191 aa)) is NADH dehydrogenase I subunit C. Residues 215-601 (DYMFLNLGPN…IDFVMSDVDR (387 aa)) form an NADH dehydrogenase I subunit D region.

The protein in the N-terminal section; belongs to the complex I 30 kDa subunit family. It in the C-terminal section; belongs to the complex I 49 kDa subunit family. NDH-1 is composed of 13 different subunits. Subunits NuoB, CD, E, F, and G constitute the peripheral sector of the complex.

The protein resides in the cell inner membrane. It carries out the reaction a quinone + NADH + 5 H(+)(in) = a quinol + NAD(+) + 4 H(+)(out). Functionally, NDH-1 shuttles electrons from NADH, via FMN and iron-sulfur (Fe-S) centers, to quinones in the respiratory chain. The immediate electron acceptor for the enzyme in this species is believed to be ubiquinone. Couples the redox reaction to proton translocation (for every two electrons transferred, four hydrogen ions are translocated across the cytoplasmic membrane), and thus conserves the redox energy in a proton gradient. This chain is NADH-quinone oxidoreductase subunit C/D, found in Aeromonas salmonicida (strain A449).